A 562-amino-acid polypeptide reads, in one-letter code: Phosphoglucomutase-1 (562 aa).

Met1 carries the N-acetylmethionine modification. An N6-acetyllysine modification is found at Lys16. Arg23 is a binding site for alpha-D-glucose 1,6-bisphosphate. Thr115 carries the phosphothreonine modification. Ser117 contributes to the alpha-D-glucose 1,6-bisphosphate binding site. The Phosphoserine intermediate role is filled by Ser117. Mg(2+) is bound at residue Ser117. 2 positions are modified to phosphoserine: Ser117 and Ser134. Position 185 is a phosphothreonine (Thr185). Phosphoserine is present on residues Ser206 and Ser213. The Mg(2+) site is built by Asp288, Asp290, and Asp292. Residues Asp292 and Arg293 each coordinate alpha-D-glucose 1,6-bisphosphate. Lys349 carries the post-translational modification N6-acetyllysine. At Tyr353 the chain carries Phosphotyrosine. Alpha-D-glucose 1,6-bisphosphate is bound at residue Thr357. Phosphoserine is present on Ser369. Alpha-D-glucose 1,6-bisphosphate contacts are provided by Glu376, Ser378, and Lys389. A Phosphoserine modification is found at Ser378. N6-succinyllysine is present on Lys419. A Phosphothreonine; by PAK1 modification is found at Thr467. Residues Ser477, Ser485, and Ser505 each carry the phosphoserine modification. Thr507 bears the Phosphothreonine mark. A phosphoserine mark is found at Ser509 and Ser541.

The protein belongs to the phosphohexose mutase family. As to quaternary structure, monomer. It depends on Mg(2+) as a cofactor. In terms of processing, phosphorylation at Thr-467 by PAK1 significantly enhances enzymatic activity.

Its subcellular location is the cytoplasm. It catalyses the reaction alpha-D-glucose 1-phosphate = alpha-D-glucose 6-phosphate. The enzyme catalyses O-phospho-L-seryl-[protein] + alpha-D-glucose 1-phosphate = alpha-D-glucose 1,6-bisphosphate + L-seryl-[protein]. The catalysed reaction is alpha-D-glucose 1,6-bisphosphate + L-seryl-[protein] = O-phospho-L-seryl-[protein] + alpha-D-glucose 6-phosphate. Its function is as follows. Catalyzes the reversible isomerization of alpha-D-glucose 1-phosphate to alpha-D-glucose 6-phosphate. The mechanism proceeds via the intermediate compound alpha-D-glucose 1,6-bisphosphate. This enzyme participates in both the breakdown and synthesis of glucose. This Macaca fascicularis (Crab-eating macaque) protein is Phosphoglucomutase-1 (PGM1).